Here is a 494-residue protein sequence, read N- to C-terminus: Tripartite motif-containing protein 5 (494 aa).

Residue Ala-2 is modified to N-acetylalanine. An RING-type zinc finger spans residues 15–59 (CPICLELLTEPLSLDCGHSFCQACITANHKESTLHQGERSCPLCR). A Phosphoserine modification is found at Ser-86. The B box-type zinc finger occupies 91–132 (QKVDLCARHGEKLLLFCQQDGNVICWLCERSQEHRGHHTFLV). Residues Cys-96, His-99, Cys-118, and His-124 each contribute to the Zn(2+) site. A coiled-coil region spans residues 140–223 (RENLQVVLEM…RLVQSENDMV (84 aa)). The required for interaction with GABARAP and for autophagy stretch occupies residues 186–199 (FKQLRDILDCEESN). Positions 280 to 494 (PDLKGMLQVS…LPMTLCSPRS (215 aa)) constitute a B30.2/SPRY domain.

This sequence belongs to the TRIM/RBCC family. In terms of assembly, can form homodimers and homotrimers. In addition to lower-order dimerization, also exhibits a higher-order multimerization and both low- and high-order multimerizations are essential for its restriction activity. Interacts with BTBD1 and BTBD2. Interacts with PSMC4, PSMC5, PSMD7 and HSPA8/HSC70. Interacts (via B30.2/SPRY domain) with HSPA1A/B. Interacts with PSMC2, MAP3K7/TAK1, TAB2 and TAB3. Interacts with SQSTM1. Interacts with TRIM6 and TRIM34. Interacts with ULK1 (phosphorylated form), GABARAP, GABARAPL1, GABARAPL2, MAP1LC3A, MAP1LC3C and BECN1. In terms of processing, degraded in a proteasome-independent fashion in the absence of viral infection but in a proteasome-dependent fashion following exposure to restriction sensitive virus. Autoubiquitinated in a RING finger- and UBE2D2-dependent manner. Monoubiquitinated by TRIM21. Deubiquitinated by Yersinia YopJ. Ubiquitination may not lead to proteasomal degradation.

Its subcellular location is the cytoplasm. It is found in the nucleus. The enzyme catalyses S-ubiquitinyl-[E2 ubiquitin-conjugating enzyme]-L-cysteine + [acceptor protein]-L-lysine = [E2 ubiquitin-conjugating enzyme]-L-cysteine + N(6)-ubiquitinyl-[acceptor protein]-L-lysine.. The protein operates within protein modification; protein ubiquitination. Its function is as follows. Capsid-specific restriction factor that prevents infection from non-host-adapted retroviruses. Blocks viral replication early in the life cycle, after viral entry but before reverse transcription. In addition to acting as a capsid-specific restriction factor, also acts as a pattern recognition receptor that activates innate immune signaling in response to the retroviral capsid lattice. Binding to the viral capsid triggers its E3 ubiquitin ligase activity, and in concert with the heterodimeric ubiquitin conjugating enzyme complex UBE2V1-UBE2N (also known as UBC13-UEV1A complex) generates 'Lys-63'-linked polyubiquitin chains, which in turn are catalysts in the autophosphorylation of the MAP3K7/TAK1 complex (includes TAK1, TAB2, and TAB3). Activation of the MAP3K7/TAK1 complex by autophosphorylation results in the induction and expression of NF-kappa-B and MAPK-responsive inflammatory genes, thereby leading to an innate immune response in the infected cell. Plays a role in regulating autophagy through activation of autophagy regulator BECN1 by causing its dissociation from its inhibitors BCL2 and TAB2. The protein is Tripartite motif-containing protein 5 (TRIM5) of Plecturocebus donacophilus (Bolivian gray titi monkey).